Reading from the N-terminus, the 466-residue chain is Glutamate--tRNA ligase 2 (466 aa).

The 'HIGH' region motif lies at 9-19 (PSPTGSLHLGG). The short motif at 236-240 (KLSKR) is the 'KMSKS' region element. ATP is bound at residue K239.

This sequence belongs to the class-I aminoacyl-tRNA synthetase family. Glutamate--tRNA ligase type 1 subfamily. Monomer.

It localises to the cytoplasm. The enzyme catalyses tRNA(Glu) + L-glutamate + ATP = L-glutamyl-tRNA(Glu) + AMP + diphosphate. Its function is as follows. Catalyzes the attachment of glutamate to tRNA(Glu) in a two-step reaction: glutamate is first activated by ATP to form Glu-AMP and then transferred to the acceptor end of tRNA(Glu). The polypeptide is Glutamate--tRNA ligase 2 (Anaplasma marginale (strain St. Maries)).